Consider the following 170-residue polypeptide: Large ribosomal subunit protein uL18c (170 aa).

The N-terminal 63 residues, 1–63 (MLASPALAGA…QADRIARHVR (63 aa)), are a transit peptide targeting the chloroplast.

The protein belongs to the universal ribosomal protein uL18 family. As to quaternary structure, part of the 50S ribosomal subunit; contacts the 5S rRNA.

Its subcellular location is the plastid. The protein localises to the chloroplast. Binds 5S rRNA, forms part of the central protuberance of the 50S subunit. The sequence is that of Large ribosomal subunit protein uL18c (RPL18) from Oryza sativa subsp. japonica (Rice).